The primary structure comprises 817 residues: Fibroblast growth factor receptor 2 (817 aa).

The first 22 residues, M1–A22, serve as a signal peptide directing secretion. Over R23–E377 the chain is Extracellular. Ig-like C2-type domains are found at residues L26 to T126, P159 to D247, and P256 to T358. Residues N32, N84, and N124 are each glycosylated (N-linked (GlcNAc...) asparagine). A disulfide bridge links C63 with C108. A heparin-binding region spans residues K161–R178. A disulfide bond links C179 and C231. N-linked (GlcNAc...) asparagine glycosylation is found at N228, N265, N297, N318, and N331. C278 and C342 are oxidised to a cystine. The chain crosses the membrane as a helical span at residues I378–C398. Over R399–T817 the chain is Cytoplasmic. The interval T429–P465 is disordered. Positions S431 to S441 are enriched in low complexity. Y462 carries the post-translational modification Phosphotyrosine; by autocatalysis. The Protein kinase domain occupies L477–L766. Residues L483–V491, K513, E561–A563, and N567 contribute to the ATP site. Phosphotyrosine; by autocatalysis is present on Y582. Residue D622 is the Proton acceptor of the active site. 3 positions are modified to phosphotyrosine; by autocatalysis: Y652, Y653, and Y765.

Belongs to the protein kinase superfamily. Tyr protein kinase family. Fibroblast growth factor receptor subfamily. As to quaternary structure, monomer. Homodimer after ligand binding. In terms of processing, autophosphorylated. Binding of FGF family members together with heparan sulfate proteoglycan or heparin promotes receptor dimerization and autophosphorylation on tyrosine residues. Autophosphorylation occurs in trans between the two FGFR molecules present in the dimer. N-glycosylated in the endoplasmic reticulum. The N-glycan chains undergo further maturation to an Endo H-resistant form in the Golgi apparatus. Post-translationally, ubiquitinated. FGFR2 is rapidly ubiquitinated after autophosphorylation, leading to internalization and degradation. Subject to degradation both in lysosomes and by the proteasome.

Its subcellular location is the cell membrane. The protein resides in the golgi apparatus. The protein localises to the cytoplasmic vesicle. It carries out the reaction L-tyrosyl-[protein] + ATP = O-phospho-L-tyrosyl-[protein] + ADP + H(+). Present in an inactive conformation in the absence of bound ligand. Ligand binding leads to dimerization and activation by autophosphorylation on tyrosine residues. In terms of biological role, tyrosine-protein kinase that acts as a cell-surface receptor for fibroblast growth factors and plays an essential role in the regulation of cell proliferation, differentiation, migration and apoptosis, and in the regulation of embryonic development. Required for normal embryonic patterning, limb bud development, lung morphogenesis, osteogenesis and skin development. Plays an essential role in the regulation of osteoblast differentiation, proliferation and apoptosis, and is required for normal skeleton development. Promotes cell proliferation in keratinocytes and immature osteoblasts, but promotes apoptosis in differentiated osteoblasts. Phosphorylates PLCG1, FRS2 and PAK4. Ligand binding leads to the activation of several signaling cascades. Activation of PLCG1 leads to the production of the cellular signaling molecules diacylglycerol and inositol 1,4,5-trisphosphate. Phosphorylation of FRS2 triggers recruitment of GRB2, GAB1, PIK3R1 and SOS1, and mediates activation of RAS, MAPK1/ERK2, MAPK3/ERK1 and the MAP kinase signaling pathway, as well as of the AKT1 signaling pathway. FGFR2 signaling is down-regulated by ubiquitination, internalization and degradation. Mutations that lead to constitutive kinase activation or impair normal FGFR2 maturation, internalization and degradation lead to aberrant signaling. Over-expressed FGFR2 promotes activation of STAT1. This Danio rerio (Zebrafish) protein is Fibroblast growth factor receptor 2 (fgfr2).